The following is a 557-amino-acid chain: Protein PECTIC ARABINOGALACTAN SYNTHESIS-RELATED (557 aa).

Residues 1–54 (MAELRHSSSLGSRSSSSPLRAAGDEDSSSPHVHDHSPNGGDDEDGRPRHPSRDR) form a disordered region. The Cytoplasmic portion of the chain corresponds to 1–79 (MAELRHSSSL…DPRVSPQKNK (79 aa)). Positions 7 to 20 (SSSLGSRSSSSPLR) are enriched in low complexity. The span at 45 to 54 (GRPRHPSRDR) shows a compositional bias: basic and acidic residues. The helical; Signal-anchor for type II membrane protein transmembrane segment at 80–100 (ISLLLILILAIASLISVYGII) threads the bilayer. Residues 101–557 (NHLNAPYLCK…NPLTPCMCKA (457 aa)) are Lumenal-facing. 3 N-linked (GlcNAc...) asparagine glycosylation sites follow: N156, N188, and N324. 336–338 (HLR) contributes to the substrate binding site. N375 carries N-linked (GlcNAc...) asparagine glycosylation.

The protein belongs to the glycosyltransferase GT106 family. As to expression, widely expressed with the highest expression in reproductive tissues and roots.

The protein localises to the golgi apparatus membrane. It participates in glycan metabolism; pectin biosynthesis. Its function is as follows. Glycosyltransferase involved in the biosynthesis of pectic type-II arabinogalactans. The protein is Protein PECTIC ARABINOGALACTAN SYNTHESIS-RELATED of Arabidopsis thaliana (Mouse-ear cress).